Here is a 346-residue protein sequence, read N- to C-terminus: Methylthioribose-1-phosphate isomerase 1 (346 aa).

Substrate-binding positions include 48 to 50 (RGA), arginine 91, and glutamine 196. Residue aspartate 237 is the Proton donor of the active site. 247-248 (NK) serves as a coordination point for substrate.

Belongs to the eIF-2B alpha/beta/delta subunits family. MtnA subfamily.

It carries out the reaction 5-(methylsulfanyl)-alpha-D-ribose 1-phosphate = 5-(methylsulfanyl)-D-ribulose 1-phosphate. Its pathway is amino-acid biosynthesis; L-methionine biosynthesis via salvage pathway; L-methionine from S-methyl-5-thio-alpha-D-ribose 1-phosphate: step 1/6. In terms of biological role, catalyzes the interconversion of methylthioribose-1-phosphate (MTR-1-P) into methylthioribulose-1-phosphate (MTRu-1-P). The sequence is that of Methylthioribose-1-phosphate isomerase 1 from Pseudothermotoga lettingae (strain ATCC BAA-301 / DSM 14385 / NBRC 107922 / TMO) (Thermotoga lettingae).